Here is a 264-residue protein sequence, read N- to C-terminus: Thymidylate synthase (264 aa).

DUMP is bound at residue R21. H51 contacts (6R)-5,10-methylene-5,6,7,8-tetrahydrofolate. 126 to 127 (RR) lines the dUMP pocket. Residue C146 is the Nucleophile of the active site. DUMP contacts are provided by residues 166-169 (RSAD), N177, and 207-209 (HLY). Position 169 (D169) interacts with (6R)-5,10-methylene-5,6,7,8-tetrahydrofolate. (6R)-5,10-methylene-5,6,7,8-tetrahydrofolate is bound at residue A263.

It belongs to the thymidylate synthase family. Bacterial-type ThyA subfamily. In terms of assembly, homodimer.

The protein resides in the cytoplasm. It carries out the reaction dUMP + (6R)-5,10-methylene-5,6,7,8-tetrahydrofolate = 7,8-dihydrofolate + dTMP. It functions in the pathway pyrimidine metabolism; dTTP biosynthesis. In terms of biological role, catalyzes the reductive methylation of 2'-deoxyuridine-5'-monophosphate (dUMP) to 2'-deoxythymidine-5'-monophosphate (dTMP) while utilizing 5,10-methylenetetrahydrofolate (mTHF) as the methyl donor and reductant in the reaction, yielding dihydrofolate (DHF) as a by-product. This enzymatic reaction provides an intracellular de novo source of dTMP, an essential precursor for DNA biosynthesis. This Stutzerimonas stutzeri (strain A1501) (Pseudomonas stutzeri) protein is Thymidylate synthase.